A 622-amino-acid polypeptide reads, in one-letter code: Auxin response factor 11 (622 aa).

Positions 145–247 form a DNA-binding region, TF-B3; sequence FVKILTASDT…DLRVGVRRLA (103 aa). Disordered stretches follow at residues 358–398 and 483–513; these read SIQR…ISEI and SNIS…TRSR. 2 stretches are compositionally biased toward polar residues: residues 376 to 387 and 483 to 511; these read SALTPTPTQQQS and SNIS…TSTR. In terms of domain architecture, PB1 spans 511 to 594; that stretch reads RSRIKVQMQG…KKLFIYPSDE (84 aa).

The protein belongs to the ARF family. Homodimers and heterodimers.

The protein localises to the nucleus. Its function is as follows. Auxin response factors (ARFs) are transcriptional factors that bind specifically to the DNA sequence 5'-TGTCTC-3' found in the auxin-responsive promoter elements (AuxREs). Could act as transcriptional activator or repressor. Formation of heterodimers with Aux/IAA proteins may alter their ability to modulate early auxin response genes expression. The chain is Auxin response factor 11 (ARF11) from Arabidopsis thaliana (Mouse-ear cress).